A 606-amino-acid polypeptide reads, in one-letter code: NADH-ubiquinone oxidoreductase chain 5 (606 aa).

The next 16 helical transmembrane spans lie at 1-21, 43-63, 87-107, 112-132, 137-157, 171-191, 213-233, 241-261, 273-293, 301-321, 324-344, 366-386, 407-429, 457-477, 482-502, and 582-602; these read MNPFASLTLTTLIILTIPIMM, AFTLSLVPLLMFMHTGQEMII, VMFIPVALFVTWSIMEFSMWY, PFINRFFKYLVLFLITMMILV, LFQLFIGWEGVGIMSFLLIGW, AILYNRIGDIGFVLSMAWFLT, LIGLLLAAAGKSAQFGLHPWL, TPVSALLHSSTMVVAGVFLLI, VQTMTLCLGAITTLFTALCAI, IVAFSTSSQLGLMMVTIGINQ, LAFLHICMHAFFKAMLFMCSG, MPFTTTALIIGSLALTGMPYL, WALLMTLIATSLTAAYSTRIIFF, LLIGSIFAGFIISNNIPPMTV, MPLYMKMTALIVTIMGFMLAL, and GLIKLYFLSFLITIMISMTLF.

It belongs to the complex I subunit 5 family. In terms of assembly, core subunit of respiratory chain NADH dehydrogenase (Complex I) which is composed of 45 different subunits.

The protein resides in the mitochondrion inner membrane. The enzyme catalyses a ubiquinone + NADH + 5 H(+)(in) = a ubiquinol + NAD(+) + 4 H(+)(out). Its function is as follows. Core subunit of the mitochondrial membrane respiratory chain NADH dehydrogenase (Complex I) which catalyzes electron transfer from NADH through the respiratory chain, using ubiquinone as an electron acceptor. Essential for the catalytic activity and assembly of complex I. The protein is NADH-ubiquinone oxidoreductase chain 5 (MT-ND5) of Sus scrofa (Pig).